The following is a 338-amino-acid chain: UDP-N-acetylglucosamine--N-acetylmuramyl-(pentapeptide) pyrophosphoryl-undecaprenol N-acetylglucosamine transferase (338 aa).

UDP-N-acetyl-alpha-D-glucosamine contacts are provided by residues 10–12, asparagine 122, serine 177, and glutamine 275; that span reads TGG.

Belongs to the glycosyltransferase 28 family. MurG subfamily.

It is found in the cell inner membrane. The catalysed reaction is di-trans,octa-cis-undecaprenyl diphospho-N-acetyl-alpha-D-muramoyl-L-alanyl-D-glutamyl-meso-2,6-diaminopimeloyl-D-alanyl-D-alanine + UDP-N-acetyl-alpha-D-glucosamine = di-trans,octa-cis-undecaprenyl diphospho-[N-acetyl-alpha-D-glucosaminyl-(1-&gt;4)]-N-acetyl-alpha-D-muramoyl-L-alanyl-D-glutamyl-meso-2,6-diaminopimeloyl-D-alanyl-D-alanine + UDP + H(+). It participates in cell wall biogenesis; peptidoglycan biosynthesis. Its function is as follows. Cell wall formation. Catalyzes the transfer of a GlcNAc subunit on undecaprenyl-pyrophosphoryl-MurNAc-pentapeptide (lipid intermediate I) to form undecaprenyl-pyrophosphoryl-MurNAc-(pentapeptide)GlcNAc (lipid intermediate II). The protein is UDP-N-acetylglucosamine--N-acetylmuramyl-(pentapeptide) pyrophosphoryl-undecaprenol N-acetylglucosamine transferase of Sulfurovum sp. (strain NBC37-1).